The chain runs to 389 residues: E3 ubiquitin-protein ligase E3D (389 aa).

Ala-2 is subject to N-acetylalanine. The short motif at 129 to 159 (PLPSENWGALVGEWCCHPDPFANKSLHPQEN) is the BRAT1-like motif element. Residue Cys-144 participates in Zn(2+) binding. The interval 235 to 257 (QSSERSFPIIPRSWFVQSVIAQC) is interaction with UBE2C. The HECT-like stretch occupies residues 353–389 (LPSATCLELLLILSKSNANLPSSLRRVNSFQVAFLKM).

Interacts with UBE2C/UbcH10 (E2 ubiquitin-conjugating enzyme). In vitro, interacts with cyclin-B. In terms of processing, ubiquitinated by UBCH10 (E2 ubiquitin-conjugating enzyme).

The protein localises to the cytoplasm. It carries out the reaction S-ubiquitinyl-[E2 ubiquitin-conjugating enzyme]-L-cysteine + [acceptor protein]-L-lysine = [E2 ubiquitin-conjugating enzyme]-L-cysteine + N(6)-ubiquitinyl-[acceptor protein]-L-lysine.. The protein operates within protein modification; protein ubiquitination. E3 ubiquitin-protein ligase which accepts ubiquitin from specific E2 ubiquitin-conjugating enzymes, and transfers it to substrates, generally promoting their degradation by the proteasome. Independently of its E3 ubiquitin-protein ligase activity, acts as an inhibitor of CPSF3 endonuclease activity by blocking CPSF3 active site. The chain is E3 ubiquitin-protein ligase E3D (UBE3D) from Homo sapiens (Human).